Here is a 34-residue protein sequence, read N- to C-terminus: Mu-theraphotoxin-CCy1a (34 aa).

Disulfide bonds link C3/C18, C10/C23, and C17/C30.

This sequence belongs to the neurotoxin 10 (Hwtx-1) family. 14 (Hntx-1) subfamily. Expressed by the venom gland.

The protein resides in the secreted. Functionally, voltage-gated sodium channel Nav1.7/SCN9A inhibitor. This Chromatopelma cyaneopubescens (Greenbottle blue tarantula) protein is Mu-theraphotoxin-CCy1a.